A 1324-amino-acid chain; its full sequence is Ubiquitin carboxyl-terminal hydrolase 42 (1324 aa).

Disordered regions lie at residues 1–38 (MTIVDKASESSDPSAYQNQPGSSEAVSPGDMDAGSASW) and 63–87 (YSSSSVPDKSKPSPQKDQALGDGIA). Positions 10 to 25 (SSDPSAYQNQPGSSEA) are enriched in polar residues. Over residues 63-80 (YSSSSVPDKSKPSPQKDQ) the composition is skewed to low complexity. S75 is modified (phosphoserine). Residues 111 to 412 (AGLQNLGNTC…QAYVLFYIRS (302 aa)) enclose the USP domain. The Nucleophile role is filled by C120. The active-site Proton acceptor is H371. Disordered regions lie at residues 452-494 (IGPQ…NRAS), 536-707 (QSQP…MPAP), 722-1026 (LSNK…RHRS), 1085-1131 (RAGL…HPDR), 1149-1254 (DRFH…VKDS), and 1275-1294 (GGFPLSGGPPLEGVGPFREK). Residues 477 to 489 (PSSSMSSPNGNSS) show a composition bias toward low complexity. S483 bears the Phosphoserine mark. The span at 536–564 (QSQPNLHSNSLENPTKPVPSSTITNSAVQ) shows a compositional bias: polar residues. Residues 565–576 (STSNASTMSVSS) are compositionally biased toward low complexity. Over residues 586–603 (ESCSQPVMNGKSKLNSSV) the composition is skewed to polar residues. S754 and S856 each carry phosphoserine. Basic and acidic residues-rich tracts occupy residues 938-974 (AKEKIGSLRKVDRGHYRSRRERSSSGEPARESRSKTE), 984-1013 (CPRERDRQDRHAPEHHPGHGDRLSPGERRS), 1101-1113 (RGCEPARERERHR), 1149-1158 (DRFHEHENGK), and 1165-1191 (DSVENSDSHVEKKARRSEQKDPLEEPK). The residue at position 1181 (S1181) is a Phosphoserine. Residues 1192–1206 (AKKHKKSKKKKKSKD) are compositionally biased toward basic residues. Over residues 1207-1218 (KHRDRDSRHQQD) the composition is skewed to basic and acidic residues. A phosphoserine mark is found at S1219, S1222, and S1226. Over residues 1231-1245 (HRHKKKKKKKKRHSR) the composition is skewed to basic residues. Phosphoserine is present on S1247.

This sequence belongs to the peptidase C19 family. As to expression, broadly expressed.

It catalyses the reaction Thiol-dependent hydrolysis of ester, thioester, amide, peptide and isopeptide bonds formed by the C-terminal Gly of ubiquitin (a 76-residue protein attached to proteins as an intracellular targeting signal).. In terms of biological role, deubiquitinating enzyme which may play an important role during spermatogenesis. This is Ubiquitin carboxyl-terminal hydrolase 42 (USP42) from Homo sapiens (Human).